Reading from the N-terminus, the 355-residue chain is Zinc finger protein CONSTANS-LIKE 5 (355 aa).

The Zn(2+) site is built by Cys22, Cys25, Cys45, His50, Cys61, Cys64, Cys84, and His89. The B box-type 1; atypical zinc-finger motif lies at Cys22–Val60. The B box-type 2; atypical zinc finger occupies Cys61–Val103. Residues Arg285–Arg327 form the CCT domain.

This sequence belongs to the CONSTANS family.

The protein resides in the nucleus. This chain is Zinc finger protein CONSTANS-LIKE 5 (COL5), found in Arabidopsis thaliana (Mouse-ear cress).